Consider the following 433-residue polypeptide: Keratin, type I cytoskeletal 17 (433 aa).

A disordered region spans residues 1-24 (MTTTIRQFTSSSSIKGSSGLGGGS). Residues 1-83 (MTTTIRQFTS…GGVDGLLAGG (83 aa)) are head. A phosphoserine mark is found at S12 and S13. A Glycyl lysine isopeptide (Lys-Gly) (interchain with G-Cter in SUMO1); alternate cross-link involves residue K15. Residue K15 forms a Glycyl lysine isopeptide (Lys-Gly) (interchain with G-Cter in SUMO2); alternate linkage. Phosphoserine occurs at positions 25, 32, 34, and 39. S44 bears the Phosphoserine; by RPS6KA1 mark. The interval 84–120 (EKATMQNLNDRLASYLDKVRALEEANTELEVKIRDWY) is coil 1A. An IF rod domain is found at 84–395 (EKATMQNLND…RLLEGEDAHL (312 aa)). T110 carries the post-translational modification Phosphothreonine. The tract at residues 121 to 138 (QKQAPGPARDYSAYYHTI) is linker 1. The coil 1B stretch occupies residues 139–230 (EDLKNKILVA…NHEEEMNALR (92 aa)). Residues 231 to 250 (GQVGGEINVEMDAAPGVDLS) are linker 12. Residues 251–392 (RILSEMRDQY…TYRRLLEGED (142 aa)) form a coil 2 region. K278 is covalently cross-linked (Glycyl lysine isopeptide (Lys-Gly) (interchain with G-Cter in SUMO2)). Phosphothreonine is present on T279. S323 is modified (phosphoserine). Residues 393 to 433 (AHLTQYKPKEPVTTRQVRTIVEEVQDGKVISSREQVHQTTR) form a tail region. Glycyl lysine isopeptide (Lys-Gly) (interchain with G-Cter in SUMO1); alternate cross-links involve residues K399, K401, and K420. Residues K399, K401, and K420 each participate in a glycyl lysine isopeptide (Lys-Gly) (interchain with G-Cter in SUMO2); alternate cross-link.

Belongs to the intermediate filament family. Heterodimer of a type I and a type II keratin. KRT17 associates with KRT6 isomers (KRT6A or KRT6B). Interacts with TRADD and SFN. Phosphorylation at Ser-44 occurs in a growth- and stress-dependent fashion in skin keratinocytes, it has no effect on filament organization. In terms of tissue distribution, expressed strongly in outer root sheath and medulla region of hair follicle and in the early differentiating epithelial cells (trichocytes) within the hair bulb region. Weak expression in the matrix cells of hair bulb. Also present in the sweat gland within the skin, vibrissae follicle, salivary gland, tooth and thymus.

Its subcellular location is the cytoplasm. Type I keratin involved in the formation and maintenance of various skin appendages, specifically in determining shape and orientation of hair. Required for the correct growth of hair follicles, in particular for the persistence of the anagen (growth) state. Modulates the function of TNF-alpha in the specific context of hair cycling. Regulates protein synthesis and epithelial cell growth through binding to the adapter protein SFN and by stimulating Akt/mTOR pathway. Involved in tissue repair. May be a marker of basal cell differentiation in complex epithelia and therefore indicative of a certain type of epithelial 'stem cells'. Acts as a promoter of epithelial proliferation by acting a regulator of immune response in skin: promotes Th1/Th17-dominated immune environment contributing to the development of basaloid skin tumors. May act as an autoantigen in the immunopathogenesis of psoriasis, with certain peptide regions being a major target for autoreactive T-cells and hence causing their proliferation. The chain is Keratin, type I cytoskeletal 17 (Krt17) from Mus musculus (Mouse).